Consider the following 456-residue polypeptide: MESFFSRSTSIVSKLSFLALWIVFLISSSSFTSTEAYDALDPEGNITMKWDVMSWTPDGYVAVVTMFNFQKYRHIQSPGWTLGWKWAKKEVIWSMVGAQTTEQGDCSKYKGNIPHCCKKDPTVVDLLPGTPYNQQIANCCKGGVMNSWVQDPATAASSFQISVGAAGTTNKTVRVPRNFTLMGPGPGYTCGPAKIVRPTKFVTTDTRRTTQAMMTWNITCTYSQFLAQRTPTCCVSLSSFYNETIVGCPTCACGCQNNRTESGACLDPDTPHLASVVSPPTKKGTVLPPLVQCTRHMCPIRVHWHVKQNYKEYWRVKITITNFNYRLNYTQWNLVAQHPNLDNITQIFSFNYKSLTPYAGLNDTAMLWGVKFYNDFLSEAGPLGNVQSEILFRKDQSTFTFEKGWAFPRRIYFNGDNCVMPPPDSYPFLPNGGSRSQFSFVAAVLLPLLVFFFFSA.

Positions 1 to 36 are cleaved as a signal peptide; that stretch reads MESFFSRSTSIVSKLSFLALWIVFLISSSSFTSTEA. N-linked (GlcNAc...) asparagine glycosylation is found at Asn45, Asn170, Asn178, Asn217, Asn242, Asn258, Asn328, Asn343, and Asn362. Residue Asn431 is the site of GPI-anchor amidated asparagine attachment. The propeptide at 432 to 456 is removed in mature form; that stretch reads GGSRSQFSFVAAVLLPLLVFFFFSA.

This sequence belongs to the COBRA family. As to expression, expressed in roots, stems, leaves, flowers and siliques. Up-regulated in the root zone of rapid longitudinal expansion.

Its subcellular location is the lateral cell membrane. Its function is as follows. Involved in determining the orientation of cell expansion, probably by playing an important role in cellulose deposition. May act by recruiting cellulose synthesizing complexes to discrete positions on the cell surface. This Arabidopsis thaliana (Mouse-ear cress) protein is Protein COBRA (COB).